A 276-amino-acid chain; its full sequence is Large ribosomal subunit protein uL2 (276 aa).

The disordered stretch occupies residues 219–276 (TVRGSAMNPNDHPHGGGEGRTSIGRPAPVTPWGKPALGYKTRDSKKASNKMIVSRRKK).

It belongs to the universal ribosomal protein uL2 family. As to quaternary structure, part of the 50S ribosomal subunit. Forms a bridge to the 30S subunit in the 70S ribosome.

One of the primary rRNA binding proteins. Required for association of the 30S and 50S subunits to form the 70S ribosome, for tRNA binding and peptide bond formation. It has been suggested to have peptidyltransferase activity; this is somewhat controversial. Makes several contacts with the 16S rRNA in the 70S ribosome. This Alkaliphilus oremlandii (strain OhILAs) (Clostridium oremlandii (strain OhILAs)) protein is Large ribosomal subunit protein uL2.